The chain runs to 154 residues: Putative glutamine amidotransferase-like protein RP712 (154 aa).

Residues 1 to 94 (MSIEKEKFWA…QQSVWSFHNK (94 aa)) form the Glutamine amidotransferase type-1 domain.

The sequence is that of Putative glutamine amidotransferase-like protein RP712 from Rickettsia prowazekii (strain Madrid E).